The sequence spans 285 residues: Catechol-2,3-dioxygenase (285 aa).

VOC domains lie at 9–126 (HIGY…MYAD) and 169–285 (IIGH…TFVI). 2 residues coordinate Fe cation: histidine 213 and glutamate 264.

Belongs to the extradiol ring-cleavage dioxygenase family. Requires Fe(2+) as cofactor.

It catalyses the reaction catechol + O2 = (2Z,4E)-2-hydroxy-6-oxohexa-2,4-dienoate + H(+). Functionally, involved in the meta cleavage of catechol to 2-hydroxymuconic semialdehyde. Essential for growth and viability in the presence of catechol and probably involved in the detoxification of catechol. The sequence is that of Catechol-2,3-dioxygenase (catE) from Bacillus subtilis (strain 168).